Here is a 218-residue protein sequence, read N- to C-terminus: MRIILLGAPGAGKGTQSHFISKALGIPQISTGDMLRAAVKEETPLGRKAKEVMDSGNLVSDDIILDIIKERLKEDDCRSGCLFDGFPRTIAQAEALDREGITINHVIEIRVEDSSIIQRMSGRRVHPASGRTYHLTFNPPQQQGVDDETGEPLIQRVDDTEETVKKRLAIYHEQTSPLIEYYTGRAAEGSLDSPRFTTVEGTGKVEEIRDRILKALGA.

10 to 15 lines the ATP pocket; it reads GAGKGT. The NMP stretch occupies residues 30–59; that stretch reads STGDMLRAAVKEETPLGRKAKEVMDSGNLV. AMP is bound by residues T31, R36, 57–59, 85–88, and Q92; these read NLV and GFPR. Positions 122–159 are LID; that stretch reads GRRVHPASGRTYHLTFNPPQQQGVDDETGEPLIQRVDD. ATP-binding positions include R123 and 132–133; that span reads TY. AMP is bound by residues R156 and R167. G203 serves as a coordination point for ATP.

This sequence belongs to the adenylate kinase family. Monomer.

It is found in the cytoplasm. It catalyses the reaction AMP + ATP = 2 ADP. It participates in purine metabolism; AMP biosynthesis via salvage pathway; AMP from ADP: step 1/1. In terms of biological role, catalyzes the reversible transfer of the terminal phosphate group between ATP and AMP. Plays an important role in cellular energy homeostasis and in adenine nucleotide metabolism. In Chlorobium phaeovibrioides (strain DSM 265 / 1930) (Prosthecochloris vibrioformis (strain DSM 265)), this protein is Adenylate kinase.